The chain runs to 115 residues: Phosphoribosyl-AMP cyclohydrolase (115 aa).

Asp-80 is a binding site for Mg(2+). Cys-81 is a Zn(2+) binding site. Mg(2+) contacts are provided by Asp-82 and Asp-84. Positions 97 and 104 each coordinate Zn(2+).

This sequence belongs to the PRA-CH family. In terms of assembly, homodimer. Mg(2+) serves as cofactor. Zn(2+) is required as a cofactor.

It is found in the cytoplasm. The enzyme catalyses 1-(5-phospho-beta-D-ribosyl)-5'-AMP + H2O = 1-(5-phospho-beta-D-ribosyl)-5-[(5-phospho-beta-D-ribosylamino)methylideneamino]imidazole-4-carboxamide. Its pathway is amino-acid biosynthesis; L-histidine biosynthesis; L-histidine from 5-phospho-alpha-D-ribose 1-diphosphate: step 3/9. Catalyzes the hydrolysis of the adenine ring of phosphoribosyl-AMP. In Mycobacterium sp. (strain MCS), this protein is Phosphoribosyl-AMP cyclohydrolase.